Consider the following 302-residue polypeptide: uncharacterized protein (302 aa).

One can recognise an S4 RNA-binding domain in the interval Gln19–Asn90. Residue Asp138 is part of the active site. The disordered stretch occupies residues Lys182–Gly205.

It belongs to the pseudouridine synthase RluA family.

It catalyses the reaction a uridine in RNA = a pseudouridine in RNA. This is an uncharacterized protein from Bacillus subtilis (strain 168).